The following is a 1222-amino-acid chain: ATP-dependent helicase/nuclease subunit A (1222 aa).

The UvrD-like helicase ATP-binding domain occupies 39–495 (QKRTAQQIEA…ILLKENFRSQ (457 aa)). Position 60–67 (60–67 (ASAGSGKT)) interacts with ATP. Positions 524-810 (QLIAGSHAQT…NLMTIHKSKG (287 aa)) constitute a UvrD-like helicase C-terminal domain.

This sequence belongs to the helicase family. AddA subfamily. As to quaternary structure, heterodimer of AddA and AddB/RexB. It depends on Mg(2+) as a cofactor.

The enzyme catalyses Couples ATP hydrolysis with the unwinding of duplex DNA by translocating in the 3'-5' direction.. It carries out the reaction ATP + H2O = ADP + phosphate + H(+). The heterodimer acts as both an ATP-dependent DNA helicase and an ATP-dependent, dual-direction single-stranded exonuclease. Recognizes the chi site generating a DNA molecule suitable for the initiation of homologous recombination. The AddA nuclease domain is required for chi fragment generation; this subunit has the helicase and 3' -&gt; 5' nuclease activities. This Streptococcus pyogenes serotype M4 (strain MGAS10750) protein is ATP-dependent helicase/nuclease subunit A.